We begin with the raw amino-acid sequence, 413 residues long: Serine--tRNA ligase (413 aa).

Residue 221–223 (TAE) coordinates L-serine. Residue 252–254 (RRE) coordinates ATP. Glu-275 contributes to the L-serine binding site. 339 to 342 (EVSS) lines the ATP pocket. L-serine is bound at residue Ser-375.

This sequence belongs to the class-II aminoacyl-tRNA synthetase family. Type-1 seryl-tRNA synthetase subfamily. As to quaternary structure, homodimer. The tRNA molecule binds across the dimer.

The protein localises to the cytoplasm. It catalyses the reaction tRNA(Ser) + L-serine + ATP = L-seryl-tRNA(Ser) + AMP + diphosphate + H(+). It carries out the reaction tRNA(Sec) + L-serine + ATP = L-seryl-tRNA(Sec) + AMP + diphosphate + H(+). The protein operates within aminoacyl-tRNA biosynthesis; selenocysteinyl-tRNA(Sec) biosynthesis; L-seryl-tRNA(Sec) from L-serine and tRNA(Sec): step 1/1. Catalyzes the attachment of serine to tRNA(Ser). Is also able to aminoacylate tRNA(Sec) with serine, to form the misacylated tRNA L-seryl-tRNA(Sec), which will be further converted into selenocysteinyl-tRNA(Sec). This is Serine--tRNA ligase from Dehalococcoides mccartyi (strain ATCC BAA-2100 / JCM 16839 / KCTC 5957 / BAV1).